The sequence spans 419 residues: NF-kappa-B essential modulator (419 aa).

Residues 1 to 46 (MSRTPWKSQPCEMVQPSGGPAGDQDVLGEESSLGKPTMLHLPSEQG) are disordered. The interval 1 to 197 (MSRTPWKSQP…REALQQQHSV (197 aa)) is required for interaction with and ubiquitination by MARCHF2. S31, S43, S68, and S85 each carry phosphoserine. Residues 44–111 (EQGAPETFQR…RLVERLSLEK (68 aa)) are interaction with CHUK/IKBKB. A coiled-coil region spans residues 100-353 (ARRLVERLSL…KTSCQESARI (254 aa)). Glycyl lysine isopeptide (Lys-Gly) (interchain with G-Cter in ubiquitin) cross-links involve residues K111, K139, K143, K226, K246, and K264. Positions 150 to 257 (LGELQESQSR…SVVSSERNRG (108 aa)) are interaction with TANK. Positions 242-350 (DNHIKSSVVS…SRLKTSCQES (109 aa)) are ubiquitin-binding (UBAN). The segment at 246–365 (KSSVVSSERN…MRKRHVEVSQ (120 aa)) is self-association. Residues 251 to 419 (SSERNRGLQL…LQIHVMECIE (169 aa)) form a required for interaction with TNFAIP3 region. A Glycyl lysine isopeptide (Lys-Gly) (interchain with G-Cter in SUMO); alternate cross-link involves residue K277. Residue K277 forms a Glycyl lysine isopeptide (Lys-Gly) (interchain with G-Cter in ubiquitin); alternate linkage. Glycyl lysine isopeptide (Lys-Gly) (interchain with G-Cter in ubiquitin) cross-links involve residues K283, K285, K292, and K302. A Glycyl lysine isopeptide (Lys-Gly) (interchain with G-Cter in SUMO); alternate cross-link involves residue K309. K309 participates in a covalent cross-link: Glycyl lysine isopeptide (Lys-Gly) (interchain with G-Cter in ubiquitin); alternate. Residues 322 to 343 (LAERKELLQEQLEQLQREYSRL) form a leucine-zipper region. Residue K326 forms a Glycyl lysine isopeptide (Lys-Gly) (interchain with G-Cter in ubiquitin) linkage. The interval 363–394 (VSQPTLPPAPAHHSFHPALPSQRRSPPEEPPN) is disordered. Phosphoserine occurs at positions 376 and 387. Residues 382-419 (PSQRRSPPEEPPNFCCPKCQYQAPDMDTLQIHVMECIE) form an interaction with CYLD region. A CCHC NOA-type zinc finger spans residues 389–419 (PEEPPNFCCPKCQYQAPDMDTLQIHVMECIE). Position 397 (C397) interacts with Zn(2+). K399 is covalently cross-linked (Glycyl lysine isopeptide (Lys-Gly) (interchain with G-Cter in ubiquitin)). C400, H413, and C417 together coordinate Zn(2+).

Homodimer; disulfide-linked. Component of the I-kappa-B-kinase (IKK) core complex consisting of CHUK, IKBKB and IKBKG; probably four alpha/CHUK-beta/IKBKB dimers are associated with four gamma/IKBKG subunits. The IKK core complex seems to associate with regulatory or adapter proteins to form a IKK-signalosome holo-complex. The IKK complex associates with TERF2IP/RAP1, leading to promote IKK-mediated phosphorylation of RELA/p65. Part of a complex composed of NCOA2, NCOA3, CHUK/IKKA, IKBKB, IKBKG and CREBBP. Interacts with COPS3, CYLD, NALP2, TRPC4AP and PIDD1. Interacts with ATM; the complex is exported from the nucleus. Interacts with TRAF6. Interacts with IKBKE. Interacts with TANK; the interaction is enhanced by IKBKE and TBK1. Part of a ternary complex consisting of TANK, IKBKB and IKBKG. Interacts with ZFAND5. Interacts with RIPK2. Interacts with TNIP1 and TNFAIP3; TNIP1 facilitates the TNFAIP3-mediated de-ubiquitination of IKBKG. Interacts with TNFAIP3; the interaction is induced by TNF stimulation and by polyubiquitin. Binds (via UBAN region) polyubiquitin; binds both 'Lys-63'-linked and linear polyubiquitin, with higher affinity for linear ubiquitin. Interacts with NLRP10. Interacts with TANK; this interaction increases in response to DNA damage. Interacts with USP10; this interaction increases in response to DNA damage. Interacts with ZC3H12A; this interaction increases in response to DNA damage. Interacts with IFIT5; the interaction synergizes the recruitment of IKK to MAP3K7 and enhances IKK phosphorylation. Interacts with TRIM29; this interaction induces IKBKG/NEMO ubiquitination and proteolytic degradation. Interacts with TRIM13; this interaction leads to IKBKG/NEMO ubiquitination. Interacts with ARFIP2. Interacts with RIPK1. Interacts with (ubiquitinated) BCL10; interaction with polyubiquitinated BCL10 via both 'Lys-63'-linked and linear ubiquitin is required for TCR-induced NF-kappa-B activation. Interacts with MARCHF2; during the late stages of macrophage viral and bacterial infection; the interaction leads to ubiquitination and degradation of IKBKG/NEMO. Phosphorylation at Ser-68 attenuates aminoterminal homodimerization. In terms of processing, polyubiquitinated on Lys-285 via 'Lys-63'-linked ubiquitin; the ubiquitination is mediated downstream of NOD2 and RIPK2 and probably plays a role in signaling by facilitating interactions with ubiquitin domain-containing proteins and activates the NF-kappa-B pathway. Polyubiquitinated on Lys-285 and Lys-399 through 'Lys-63'-linked ubiquitin; the ubiquitination is mediated by BCL10, MALT1 and TRAF6 and probably plays a role in signaling by facilitating interactions with ubiquitin domain-containing proteins and activates the NF-kappa-B pathway. Monoubiquitinated on Lys-277 and Lys-309; promotes nuclear export. Polyubiquitinated through 'Lys-27' by TRIM23; involved in antiviral innate and inflammatory responses. Linear polyubiquitinated on Lys-111, Lys-143, Lys-226, Lys-246, Lys-264, Lys-277, Lys-285, Lys-292, Lys-302, Lys-309 and Lys-326; the head-to-tail polyubiquitination is mediated by the LUBAC complex and plays a key role in NF-kappa-B activation. Deubiquitinated by USP10 in a TANK-dependent and -independent manner, leading to the negative regulation of NF-kappa-B signaling upon DNA damage. Ubiquitinated at Lys-326 by MARCHF2 following bacterial and viral infection which leads to its degradation. Post-translationally, sumoylated on Lys-277 and Lys-309 with SUMO1; the modification results in phosphorylation of Ser-85 by ATM leading to a replacement of the sumoylation by mono-ubiquitination on these residues. Neddylated by TRIM40, resulting in stabilization of NFKBIA and down-regulation of NF-kappa-B activity. In terms of processing, (Microbial infection) Cleaved by porcine reproductive and respiratory syndrome virus serine protease nsp4 after Glu-349. The cleavage inhibits NEMO proper function.

The protein resides in the cytoplasm. It localises to the nucleus. Regulatory subunit of the IKK core complex which phosphorylates inhibitors of NF-kappa-B thus leading to the dissociation of the inhibitor/NF-kappa-B complex and ultimately the degradation of the inhibitor. Its binding to scaffolding polyubiquitin plays a key role in IKK activation by multiple signaling receptor pathways. Can recognize and bind both 'Lys-63'-linked and linear polyubiquitin upon cell stimulation, with a much highr affinity for linear polyubiquitin. Could be implicated in NF-kappa-B-mediated protection from cytokine toxicity. Essential for viral activation of IRF3. Involved in TLR3- and IFIH1-mediated antiviral innate response; this function requires 'Lys-27'-linked polyubiquitination. The polypeptide is NF-kappa-B essential modulator (IKBKG) (Sus scrofa (Pig)).